The chain runs to 242 residues: NADPH-dependent pterin aldehyde reductase (242 aa).

The residue at position 2 (threonine 2) is an N-acetylthreonine. Position 21 to 50 (21 to 50 (LITGVSKGLGRALALELAKRGHTVIGCARS)) interacts with NADP(+). Residue serine 153 participates in substrate binding. Tyrosine 166 acts as the Proton acceptor in catalysis. Residue lysine 170 participates in NADP(+) binding.

The protein belongs to the short-chain dehydrogenases/reductases (SDR) family. As to quaternary structure, homodimer. In terms of tissue distribution, mostly expressed in seeds, and, to a lower extent, in roots, leaves, flowers and siliques.

Its subcellular location is the cytoplasm. NADPH-dependent pterin aldehyde reductase involved in pterin aldehyde salvage during folate turnover. Catalyzes the reduction of diverse aromatic and aliphatic aldehydes (e.g. acetaldehyde, n-propanal, 1-naphthaldehyde, benzaldehyde, cinnamaldehyde, n-butanal, n-hexanal, n-pentanal, 2-naphthaldehyde, n-octanal, n-nonanal and n-heptanal), in addition to the conversion of pterin-6-aldehyde (PtCHO) to 6-hydroxymethylpterin (PtCH(2)OH), and the conversion of dihydropterin-6-aldehyde (H(2)PtCHO) to 6-hydroxymethyldihydropterin (H(2)PtCH(2)OH). Cannot reduce the pterin ring. This Arabidopsis thaliana (Mouse-ear cress) protein is NADPH-dependent pterin aldehyde reductase.